We begin with the raw amino-acid sequence, 384 residues long: 4-hydroxy-3-methylbut-2-en-1-yl diphosphate synthase (flavodoxin) (384 aa).

Residues C280, C283, C315, and E322 each coordinate [4Fe-4S] cluster.

This sequence belongs to the IspG family. Requires [4Fe-4S] cluster as cofactor.

It catalyses the reaction (2E)-4-hydroxy-3-methylbut-2-enyl diphosphate + oxidized [flavodoxin] + H2O + 2 H(+) = 2-C-methyl-D-erythritol 2,4-cyclic diphosphate + reduced [flavodoxin]. The protein operates within isoprenoid biosynthesis; isopentenyl diphosphate biosynthesis via DXP pathway; isopentenyl diphosphate from 1-deoxy-D-xylulose 5-phosphate: step 5/6. Converts 2C-methyl-D-erythritol 2,4-cyclodiphosphate (ME-2,4cPP) into 1-hydroxy-2-methyl-2-(E)-butenyl 4-diphosphate. The sequence is that of 4-hydroxy-3-methylbut-2-en-1-yl diphosphate synthase (flavodoxin) from Frankia alni (strain DSM 45986 / CECT 9034 / ACN14a).